Reading from the N-terminus, the 774-residue chain is Penicillin acylase 2 proenzyme (774 aa).

Ser-240 acts as the Nucleophile in catalysis.

The protein belongs to the peptidase S45 family. In terms of assembly, heterodimer of a small subunit and a large subunit processed from the same precursor.

It carries out the reaction a penicillin + H2O = 6-aminopenicillanate + a carboxylate. The sequence is that of Penicillin acylase 2 proenzyme (acyII) from Pseudomonas sp. (strain SE83).